A 396-amino-acid chain; its full sequence is tRNA (guanine-N(7)-)-methyltransferase non-catalytic subunit wuho (396 aa).

4 WD repeats span residues 75-115, 162-201, 205-243, and 302-342; these read KVEV…AQLL, GHLSIVYDVLWSEDQQYIITCDRDDKIRVTNYPATFDIHS, GHKEFVSGLAMLTEQHIISASGDKTLRVWNYTCGKELLL, and AGTW…RASG.

It belongs to the WD repeat TRM82 family. Forms a heterodimer with the catalytic subunit Mettl1. Interacts with mei-P26 and weakly interacts with bgcn; required for the function or formation of the mei-P26-bgcn-bam-sxl complex. Interacts with nanos; may be involved in mei-P26-dependent derepression of the BMP signaling pathway. Interacts with Myc; the interaction may be mediated by mei-P26 and may be involved in the regulation of ribosome biogenesis. In terms of tissue distribution, in testis, it is present at high level in hub cells, a niche for germline stem cells of testis. Ubiquitously expressed in all testicular cells throughout spermatogenesis. Ubiquitously expressed in all germline and somatic cells of the ovary.

It localises to the nucleus. The protein localises to the cytoplasm. The protein operates within tRNA modification; N(7)-methylguanine-tRNA biosynthesis. Functionally, required for the Mettl1-dependent formation of N(7)-methylguanine at position 46 (m7G46) in tRNA. In the Mettl1-wuho methyltransferase complex, it is required to stabilize and induce conformational changes of the catalytic subunit. Required for binding of nanos mRNA and repression of translation by the mei-P26-bgcn-bam-sxl complex. May cooperate with mei-P26 and nanos to derepress the BMP signaling pathway. May cooperate with mei-P26 to suppress expression of a subset of microRNAs. May cooperate with mei-P26 to regulate bam expression levels in germline cells during gametogenesis. Required to promote mitosis to meiosis transition during gametogenesis. May regulate germline cell division in part by regulating ribosome biogenesis. In Drosophila pseudoobscura pseudoobscura (Fruit fly), this protein is tRNA (guanine-N(7)-)-methyltransferase non-catalytic subunit wuho.